Here is a 367-residue protein sequence, read N- to C-terminus: Metacaspase-1 (367 aa).

The segment at 47-77 is disordered; that stretch reads DPRTAPPPQPSSAPSPPPQIHAPPGQLPHPH. The segment covering 50 to 73 has biased composition (pro residues); that stretch reads TAPPPQPSSAPSPPPQIHAPPGQL. Residues His-164 and Cys-220 contribute to the active site.

Belongs to the peptidase C14B family. As to quaternary structure, interacts (via N-terminus) with LSD1. Post-translationally, proteolytically processed; by an autocatalytic mechanism.

Functionally, cysteine protease that cleaves specifically after arginine or lysine residues. Does not cleave caspase-specific substrates. Acts as a positive regulator of cell death. Required for both oxidative stress cell death response and hypersensitive cell death response mediated by immune response. This Arabidopsis thaliana (Mouse-ear cress) protein is Metacaspase-1 (AMC1).